The primary structure comprises 278 residues: Bifunctional protein FolD (278 aa).

NADP(+) is bound by residues 162–164 and isoleucine 228; that span reads GAG.

Belongs to the tetrahydrofolate dehydrogenase/cyclohydrolase family. As to quaternary structure, homodimer.

The enzyme catalyses (6R)-5,10-methylene-5,6,7,8-tetrahydrofolate + NADP(+) = (6R)-5,10-methenyltetrahydrofolate + NADPH. The catalysed reaction is (6R)-5,10-methenyltetrahydrofolate + H2O = (6R)-10-formyltetrahydrofolate + H(+). Its pathway is one-carbon metabolism; tetrahydrofolate interconversion. Its function is as follows. Catalyzes the oxidation of 5,10-methylenetetrahydrofolate to 5,10-methenyltetrahydrofolate and then the hydrolysis of 5,10-methenyltetrahydrofolate to 10-formyltetrahydrofolate. The sequence is that of Bifunctional protein FolD from Hydrogenobaculum sp. (strain Y04AAS1).